A 221-amino-acid polypeptide reads, in one-letter code: Germin-like protein 8-2 (221 aa).

The signal sequence occupies residues 1–24 (MASSSFSFLLVAALLGLASWKAIA). Cysteines 34 and 49 form a disulfide. N-linked (GlcNAc...) asparagine glycosylation is found at asparagine 54 and asparagine 79. Positions 64 to 215 (AMLDKPRDTN…AFQVDKKIID (152 aa)) constitute a Cupin type-1 domain. Residues histidine 112, histidine 114, glutamate 119, and histidine 160 each coordinate Mn(2+).

This sequence belongs to the germin family. Oligomer (believed to be a pentamer but probably hexamer).

It is found in the secreted. The protein localises to the extracellular space. Its subcellular location is the apoplast. Its function is as follows. Plays a role in broad-spectrum disease resistance. Probably has no oxalate oxidase activity even if the active site is conserved. In Oryza sativa subsp. japonica (Rice), this protein is Germin-like protein 8-2 (GER3).